Consider the following 218-residue polypeptide: dTTP/UTP pyrophosphatase (218 aa).

Aspartate 69 functions as the Proton acceptor in the catalytic mechanism.

This sequence belongs to the Maf family. YhdE subfamily. It depends on a divalent metal cation as a cofactor.

The protein localises to the cytoplasm. The enzyme catalyses dTTP + H2O = dTMP + diphosphate + H(+). The catalysed reaction is UTP + H2O = UMP + diphosphate + H(+). Its function is as follows. Nucleoside triphosphate pyrophosphatase that hydrolyzes dTTP and UTP. May have a dual role in cell division arrest and in preventing the incorporation of modified nucleotides into cellular nucleic acids. The sequence is that of dTTP/UTP pyrophosphatase from Thermomicrobium roseum (strain ATCC 27502 / DSM 5159 / P-2).